A 420-amino-acid chain; its full sequence is Phosphatidylinositol 5-phosphate 4-kinase type-2 gamma (420 aa).

A2 bears the N-acetylalanine mark. S26 carries the post-translational modification Phosphoserine. Residues 43-419 (AADPLVGVFL…RFLDFISNIF (377 aa)) form the PIPK domain. The tract at residues 69–75 (VMLLPDD) is required for interaction with PIP5K1A. The residue at position 349 (S349) is a Phosphoserine.

Interacts with PIP5K1A; the interaction inhibits PIP5K1A kinase activity. In terms of processing, phosphorylated, phosphorylation is induced by EGF. Widely expressed, with the most abundant expression in kidney.

Its subcellular location is the endoplasmic reticulum. The protein localises to the cytoplasm. The enzyme catalyses a 1,2-diacyl-sn-glycero-3-phospho-(1D-myo-inositol-5-phosphate) + ATP = a 1,2-diacyl-sn-glycero-3-phospho-(1D-myo-inositol-4,5-bisphosphate) + ADP + H(+). The catalysed reaction is 1,2-dihexadecanoyl-sn-glycero-3-phospho-(1D-myo-inositol-5-phosphate) + ATP = 1,2-dihexadecanoyl-sn-glycero-3-phospho-(1D-myo-inositol-4,5-bisphosphate) + ADP + H(+). It catalyses the reaction 1,2-dihexadecanoyl-sn-glycero-3-phospho-(1D-myo-inositol-5-phosphate) + GTP = 1,2-dihexadecanoyl-sn-glycero-3-phospho-(1D-myo-inositol-4,5-bisphosphate) + GDP + H(+). In terms of biological role, phosphatidylinositol 5-phosphate 4-kinase with low enzymatic activity. May be a GTP sensor, has higher GTP-dependent kinase activity than ATP-dependent kinase activity. PIP4Ks negatively regulate insulin signaling through a catalytic-independent mechanism. They interact with PIP5Ks and suppress PIP5K-mediated PtdIns(4,5)P2 synthesis and insulin-dependent conversion to PtdIns(3,4,5)P3. The polypeptide is Phosphatidylinositol 5-phosphate 4-kinase type-2 gamma (Rattus norvegicus (Rat)).